The following is a 1712-amino-acid chain: Neurexin-2 (1712 aa).

Residues 1-28 (MASGSRWRPTPPPLLLLLLLALAARADG) form the signal peptide. The 178-residue stretch at 29–206 (LEFGGGPGQW…LRGATADPLC (178 aa)) folds into the Laminin G-like 1 domain. Topologically, residues 29 to 1636 (LEFGGGPGQW…EVIRESSSTT (1608 aa)) are extracellular. An N-linked (GlcNAc...) asparagine glycan is attached at Asn60. An EGF-like 1 domain is found at 202-242 (ADPLCAPARNPCANGGLCTVLAPGEVGCDCSHTGFGGKFCS). 3 disulfides stabilise this stretch: Cys206-Cys219, Cys213-Cys229, and Cys231-Cys241. Laminin G-like domains lie at 289–486 (VATF…SFRC) and 493–686 (DPVT…APFC). Residue Asp335 participates in Ca(2+) binding. N-linked (GlcNAc...) asparagine glycosylation occurs at Asn338. 2 residues coordinate Ca(2+): Leu352 and Met420. Disulfide bonds link Cys450/Cys486, Cys657/Cys686, Cys694/Cys705, Cys699/Cys714, and Cys716/Cys726. In terms of domain architecture, EGF-like 2 spans 690–727 (TLKQCASAPCRNGGVCREGWNRFICDCIGTGFLGRVCE). 2 consecutive Laminin G-like domains span residues 732–904 (VLSY…ITYC) and 918–1093 (DPVT…ERGC). 2 residues coordinate Ca(2+): Asp779 and Leu796. The N-linked (GlcNAc...) asparagine glycan is linked to Asn841. Arg854 is a binding site for Ca(2+). 4 disulfide bridges follow: Cys1065-Cys1093, Cys1100-Cys1111, Cys1105-Cys1120, and Cys1122-Cys1132. The EGF-like 3 domain occupies 1096–1133 (PSTTCTEESCANQGVCLQQWDGFTCDCTMTSYGGPVCN). The Laminin G-like 6 domain occupies 1137–1345 (TTYIFGKGGA…HLRLVGEGPS (209 aa)). Ca(2+) contacts are provided by Asp1189 and Val1206. An N-linked (GlcNAc...) asparagine glycan is attached at Asn1236. Positions 1288 and 1290 each coordinate Ca(2+). The disordered stretch occupies residues 1373–1392 (ATTTTRRGRSPTLRDSTTQN). Residue Ser1400 is glycosylated (O-linked (Xyl...) (heparan sulfate) serine). 2 disordered regions span residues 1458-1489 (ATQDTLPPPAARRPPSGGPCQAERDDSDCEEP) and 1525-1626 (TLLS…PGAV). A helical membrane pass occupies residues 1637–1657 (GMVVGIVAAAALCILILLYAM). Residues 1658–1712 (YKYRNRDEGSYQVDQSRNYISNSAQSNGAVVKEKAPAAPKTPSKAKKNKDKEYYV) are Cytoplasmic-facing. The segment at 1679–1712 (NSAQSNGAVVKEKAPAAPKTPSKAKKNKDKEYYV) is disordered.

The protein belongs to the neurexin family. As to quaternary structure, the laminin G-like domain 1 binds to NXPH1. Interacts with PATJ. Interacts with CBLN1, CBLN2 and, less avidly, with CBLN4. Specific isoforms bind neuroligins NLGN1, NLGN2 and NLGN3. Specific isoforms bind to alpha-dystroglycan. Interacts (via Laminin G-like 1 domain) with IGSF21 (Ig-like 1 domain) in a trans-interaction manner. Interacts with CLSTN3. In terms of processing, O-glycosylated; contains heparan sulfate. Heparan sulfate attachment is required for synapse development by mediating interactions with neuroligins. As to expression, predominantly expressed in brain.

It is found in the presynaptic cell membrane. Functionally, neuronal cell surface protein that may be involved in cell recognition and cell adhesion. May mediate intracellular signaling. The protein is Neurexin-2 (NRXN2) of Homo sapiens (Human).